The following is a 63-amino-acid chain: Small ribosomal subunit protein eS30 (63 aa).

Residues 1-33 (MGKVHGSLARAGKVKSQTPKVEKQEKPKKPQGR) are disordered.

The protein belongs to the eukaryotic ribosomal protein eS30 family. As to quaternary structure, component of the small ribosomal subunit. Mature ribosomes consist of a small (40S) and a large (60S) subunit. The 40S subunit contains about 32 different proteins and 1 molecule of RNA (18S). The 60S subunit contains 45 different proteins and 3 molecules of RNA (25S, 5.8S and 5S).

The protein localises to the cytoplasm. In terms of biological role, component of the ribosome, a large ribonucleoprotein complex responsible for the synthesis of proteins in the cell. The small ribosomal subunit (SSU) binds messenger RNAs (mRNAs) and translates the encoded message by selecting cognate aminoacyl-transfer RNA (tRNA) molecules. The large subunit (LSU) contains the ribosomal catalytic site termed the peptidyl transferase center (PTC), which catalyzes the formation of peptide bonds, thereby polymerizing the amino acids delivered by tRNAs into a polypeptide chain. The nascent polypeptides leave the ribosome through a tunnel in the LSU and interact with protein factors that function in enzymatic processing, targeting, and the membrane insertion of nascent chains at the exit of the ribosomal tunnel. This is Small ribosomal subunit protein eS30 (RPS30) from Candida albicans (strain SC5314 / ATCC MYA-2876) (Yeast).